The following is a 335-amino-acid chain: Heme A synthase (335 aa).

A run of 8 helical transmembrane segments spans residues 9-29 (VAIWLFLCSIMIVLMVGIGGF), 90-110 (YVHRLFARLTGLIFILPFIYF), 120-140 (VVIRLSIALSFGVLQAFTGWY), 156-176 (MLTLHLLLALVIFALLSYQFF), 197-217 (VGIILILIVVQIIFGAFVAGL), 255-275 (VQFIHRTLALLILVLTTVLTI), 283-303 (VYVMLLSVIIQIILGVVTLLL), and 309-329 (IAISHQMFSFILFGSGLCFLC). His-259 lines the heme pocket. Position 313 (His-313) interacts with heme.

This sequence belongs to the COX15/CtaA family. Type 2 subfamily. Interacts with CtaB. Heme b serves as cofactor.

Its subcellular location is the cell membrane. The enzyme catalyses Fe(II)-heme o + 2 A + H2O = Fe(II)-heme a + 2 AH2. It functions in the pathway porphyrin-containing compound metabolism; heme A biosynthesis; heme A from heme O: step 1/1. Functionally, catalyzes the conversion of heme O to heme A by two successive hydroxylations of the methyl group at C8. The first hydroxylation forms heme I, the second hydroxylation results in an unstable dihydroxymethyl group, which spontaneously dehydrates, resulting in the formyl group of heme A. The protein is Heme A synthase of Wolbachia sp. subsp. Brugia malayi (strain TRS).